The following is a 154-amino-acid chain: Snaclec dabocetin subunit alpha (154 aa).

An N-terminal signal peptide occupies residues 1-23 (MGRFISVSFGLLVVFLSLSGTGA). 3 disulfides stabilise this stretch: cysteine 25–cysteine 36, cysteine 53–cysteine 148, and cysteine 123–cysteine 140. Residues 32–149 (HEGHCYKVFK…CGDKNPFICK (118 aa)) enclose the C-type lectin domain.

Belongs to the snaclec family. As to quaternary structure, heterodimer of subunits alpha and beta; disulfide-linked. As to expression, expressed by the venom gland.

The protein localises to the secreted. Functionally, inhibits ristocetin-induced platelet aggregation via binding to platelet glycoprotein Ibalpha (GP1BA). This is Snaclec dabocetin subunit alpha from Daboia siamensis (Eastern Russel's viper).